Consider the following 198-residue polypeptide: Phosphoheptose isomerase (198 aa).

Residues 36–198 (MARALGADRK…DRTLFGGPGG (163 aa)) enclose the SIS domain. 51–53 (NGG) serves as a coordination point for substrate. Zn(2+)-binding residues include H60 and E64. Residues E64, 93–94 (ND), 119–121 (STS), S124, and Q174 each bind substrate. Zn(2+) contacts are provided by Q174 and H182.

Belongs to the SIS family. GmhA subfamily. Homotetramer. Requires Zn(2+) as cofactor.

It localises to the cytoplasm. The enzyme catalyses 2 D-sedoheptulose 7-phosphate = D-glycero-alpha-D-manno-heptose 7-phosphate + D-glycero-beta-D-manno-heptose 7-phosphate. Its pathway is carbohydrate biosynthesis; D-glycero-D-manno-heptose 7-phosphate biosynthesis; D-glycero-alpha-D-manno-heptose 7-phosphate and D-glycero-beta-D-manno-heptose 7-phosphate from sedoheptulose 7-phosphate: step 1/1. Functionally, catalyzes the isomerization of sedoheptulose 7-phosphate in D-glycero-D-manno-heptose 7-phosphate. This chain is Phosphoheptose isomerase, found in Halorhodospira halophila (strain DSM 244 / SL1) (Ectothiorhodospira halophila (strain DSM 244 / SL1)).